A 207-amino-acid chain; its full sequence is 2,3-bisphosphoglycerate-dependent phosphoglycerate mutase (207 aa).

Residues 10 to 17 (RHGQSEWN), 23 to 24 (TG), Arg62, 89 to 92 (ERDY), Lys100, 116 to 117 (RR), and 160 to 161 (GN) each bind substrate. The active-site Tele-phosphohistidine intermediate is His11. Glu89 functions as the Proton donor/acceptor in the catalytic mechanism.

It belongs to the phosphoglycerate mutase family. BPG-dependent PGAM subfamily. Homodimer.

It carries out the reaction (2R)-2-phosphoglycerate = (2R)-3-phosphoglycerate. It functions in the pathway carbohydrate degradation; glycolysis; pyruvate from D-glyceraldehyde 3-phosphate: step 3/5. In terms of biological role, catalyzes the interconversion of 2-phosphoglycerate and 3-phosphoglycerate. The protein is 2,3-bisphosphoglycerate-dependent phosphoglycerate mutase of Nitrobacter winogradskyi (strain ATCC 25391 / DSM 10237 / CIP 104748 / NCIMB 11846 / Nb-255).